Consider the following 390-residue polypeptide: Large ribosomal subunit protein mL44 (390 aa).

A mitochondrion-targeting transit peptide spans 1–59 (MGIVLKRAIAAGMKPFPNSTWHWSRTIRPFSQHLSSTCFLQQSSRFTSKRYLHLSTLTQ). The 67-residue stretch at 139 to 205 (AFVNTVPTNK…LAHIAKYWGI (67 aa)) folds into the RNase III domain. A DRBM domain is found at 302–372 (QPTRELAMLC…ATDALMKWYC (71 aa)).

Belongs to the ribonuclease III family. Mitochondrion-specific ribosomal protein mL44 subfamily. Component of the mitochondrial large ribosomal subunit (mt-LSU). Mature yeast 74S mitochondrial ribosomes consist of a small (37S) and a large (54S) subunit. The 37S small subunit contains a 15S ribosomal RNA (15S mt-rRNA) and 34 different proteins. The 54S large subunit contains a 21S rRNA (21S mt-rRNA) and 46 different proteins. mL44 forms a heterodimer with mL57 and stabilizes rRNA expansion segments 1/2 at a membrane-facing protuberance close to the point of attachment of the ribosome to the translocon in the membrane.

The protein localises to the mitochondrion. In terms of biological role, component of the mitochondrial ribosome (mitoribosome), a dedicated translation machinery responsible for the synthesis of mitochondrial genome-encoded proteins, including at least some of the essential transmembrane subunits of the mitochondrial respiratory chain. The mitoribosomes are attached to the mitochondrial inner membrane and translation products are cotranslationally integrated into the membrane. The polypeptide is Large ribosomal subunit protein mL44 (MRPL3) (Saccharomyces cerevisiae (strain ATCC 204508 / S288c) (Baker's yeast)).